We begin with the raw amino-acid sequence, 113 residues long: Iron-sulfur cluster insertion protein ErpA (113 aa).

Cys-41, Cys-105, and Cys-107 together coordinate iron-sulfur cluster.

Belongs to the HesB/IscA family. In terms of assembly, homodimer. The cofactor is iron-sulfur cluster.

Functionally, required for insertion of 4Fe-4S clusters for at least IspG. The protein is Iron-sulfur cluster insertion protein ErpA of Colwellia psychrerythraea (strain 34H / ATCC BAA-681) (Vibrio psychroerythus).